The following is a 423-amino-acid chain: Endochitinase 42 (423 aa).

The signal sequence occupies residues 1 to 22; that stretch reads MLSFLGKSVALLAALQATLSSP. The propeptide occupies 23 to 34; it reads KPGHRRASVEKR. Residues 38-401 enclose the GH18 domain; it reads YANSVYFTNW…GTSHRALGGL (364 aa). Chitin-binding positions include 102 to 103 and 129 to 132; these read GT and GGWT. The Proton donor role is filled by E171. Y172 serves as a coordination point for chitin. A glycan (N-linked (GlcNAc...) asparagine) is linked at N218. Residues 237–240 and W378 contribute to the chitin site; that span reads MAYD.

The protein belongs to the glycosyl hydrolase 18 family. Chitinase class V subfamily.

The protein localises to the secreted. The enzyme catalyses Random endo-hydrolysis of N-acetyl-beta-D-glucosaminide (1-&gt;4)-beta-linkages in chitin and chitodextrins.. Its function is as follows. Secreted chitinase involved in the degradation of chitin, a component of the cell walls of fungi and exoskeletal elements of some animals (including worms and arthropods). Plays a morphogenetic role during apical growth, cell division and differentiation (cell wall morphogenesis). Also acts as an antifungal agent. Involved in the degradation and further assimilation of phytopathogenic fungi, namely mycoparasitism, the major mechanism accounting for the antagonistic activity against phytopathogenic fungi displayed by Trichoderma. This Trichoderma harzianum (Hypocrea lixii) protein is Endochitinase 42 (chit42).